Consider the following 261-residue polypeptide: MAAAVAGMLRGGLLPQAGRLPTLQTVRYGSKAVTRHRRVMHFQRQKLMAVTEYIPPKPAIHPSCLPSPPSPPQEEIGLIRLLRREIAAVFQDNRMIAVCQNVALSAEDKLLMRHQLRKHKILMKVFPNQVLKPFLEDSKYQNLLPLFVGHNMLLVSEEPKVKEMVRILRTVPFLPLLGGCIDDTILSRQGFINYSKLPSLPLVQGELVGGLTCLTAQTHSLLQHQPLQLTTLLDQYIREQREKDSVMSANGKPDPDTVPDS.

The N-terminal 28 residues, 1–28, are a transit peptide targeting the mitochondrion; sequence MAAAVAGMLRGGLLPQAGRLPTLQTVRY. Residues 242 to 261 are disordered; that stretch reads EKDSVMSANGKPDPDTVPDS.

The protein belongs to the universal ribosomal protein uL10 family. In terms of assembly, component of the mitochondrial large ribosomal subunit (mt-LSU). Mature mammalian 55S mitochondrial ribosomes consist of a small (28S) and a large (39S) subunit. The 28S small subunit contains a 12S ribosomal RNA (12S mt-rRNA) and 30 different proteins. The 39S large subunit contains a 16S rRNA (16S mt-rRNA), a copy of mitochondrial valine transfer RNA (mt-tRNA(Val)), which plays an integral structural role, and 52 different proteins. uL10m contributes a single cysteine residue to a zinc-binding site with mL66.

The protein localises to the mitochondrion. In Homo sapiens (Human), this protein is Large ribosomal subunit protein uL10m (MRPL10).